Consider the following 701-residue polypeptide: DNA ligase 2 (701 aa).

The segment covering Met-1–Pro-10 has biased composition (polar residues). The tract at residues Met-1 to Ala-21 is disordered. Residues Asp-64–Asp-68, Ser-111–Leu-112, and Glu-133 contribute to the NAD(+) site. The active-site N6-AMP-lysine intermediate is Lys-135. Residues Arg-156, Glu-189, Lys-302, and Lys-326 each contribute to the NAD(+) site. 4 residues coordinate Zn(2+): Cys-420, Cys-423, Cys-436, and Cys-441. Positions Lys-603–Pro-613 are enriched in low complexity. Positions Lys-603–Met-623 are disordered. In terms of domain architecture, BRCT spans Leu-615–Val-701.

It belongs to the NAD-dependent DNA ligase family. LigA subfamily. It depends on Mg(2+) as a cofactor. The cofactor is Mn(2+).

The enzyme catalyses NAD(+) + (deoxyribonucleotide)n-3'-hydroxyl + 5'-phospho-(deoxyribonucleotide)m = (deoxyribonucleotide)n+m + AMP + beta-nicotinamide D-nucleotide.. DNA ligase that catalyzes the formation of phosphodiester linkages between 5'-phosphoryl and 3'-hydroxyl groups in double-stranded DNA using NAD as a coenzyme and as the energy source for the reaction. It is essential for DNA replication and repair of damaged DNA. This Pseudarthrobacter chlorophenolicus (strain ATCC 700700 / DSM 12829 / CIP 107037 / JCM 12360 / KCTC 9906 / NCIMB 13794 / A6) (Arthrobacter chlorophenolicus) protein is DNA ligase 2.